The chain runs to 150 residues: uncharacterized protein (150 aa).

The segment at 49–88 is disordered; sequence KEWAENASTDEIDDFLTHDDETERDADPSSGSGPELMNKA. The segment covering 63 to 75 has biased composition (basic and acidic residues); the sequence is FLTHDDETERDAD.

This is an uncharacterized protein from Bacillus subtilis (strain 168).